Consider the following 498-residue polypeptide: Zinc finger protein 682 (498 aa).

The region spanning 4-75 is the KRAB domain; sequence LTFRDVTIEF…KRHETIAKPP (72 aa). 10 consecutive C2H2-type zinc fingers follow at residues 173–195, 201–223, 229–251, 257–279, 285–307, 313–335, 341–363, 369–391, 397–419, and 425–447; these read FKCMQCGKVFKSHSGLSYHKIIH, CICEECGKTFKWFSYLTKHKRIH, YKCEECGKAFNWCSSLTKHKRIH, YKCEECGKAFHWCSPFVRHKKIH, YTCEDCGRAFNRHSHLTKHKTIH, YKCKECGKAFNHCSLLTIHERTH, YKCEECGKAFNSSSILTEHKVIH, YKCEKCDKVFKRFSYLTKHKRIH, YKCEECGKAFNWSSILTEHKRIH, and YNCEECGKAFNRCSHLTRHKKIH. The C2H2-type 11; degenerate zinc-finger motif lies at 453–475; the sequence is YKCEECGKAFKRCSHLNEHKRVQ.

This sequence belongs to the krueppel C2H2-type zinc-finger protein family.

It is found in the nucleus. Its function is as follows. May be involved in transcriptional regulation. This chain is Zinc finger protein 682 (ZNF682), found in Homo sapiens (Human).